We begin with the raw amino-acid sequence, 473 residues long: Ornithine aminotransferase, mitochondrial (473 aa).

A mitochondrion-targeting transit peptide spans 1–32 (MAAALARRGGGGLARALARGRGMCSATAAERA). N6-(pyridoxal phosphate)lysine is present on Lys-293.

Belongs to the class-III pyridoxal-phosphate-dependent aminotransferase family. Homotetramer. Pyridoxal 5'-phosphate is required as a cofactor.

It localises to the mitochondrion matrix. The enzyme catalyses a 2-oxocarboxylate + L-ornithine = L-glutamate 5-semialdehyde + an L-alpha-amino acid. It participates in amino-acid biosynthesis; L-proline biosynthesis; L-glutamate 5-semialdehyde from L-ornithine: step 1/1. In terms of biological role, confers drought and oxidative stress tolerance mainly through enhancing ROS-scavenging capacity and Pro pre-accumulation. This chain is Ornithine aminotransferase, mitochondrial (OAT), found in Oryza sativa subsp. japonica (Rice).